Here is a 406-residue protein sequence, read N- to C-terminus: Interactor protein for cytohesin exchange factors 1 (406 aa).

One can recognise a PH domain in the interval 13-112; it reads HADCQGWLYK…WLNKLGFAVT (100 aa). Disordered regions lie at residues 118–173, 228–285, and 383–406; these read TKDE…FSSL, CRVS…EDDE, and PQDP…ENSL. Positions 123–134 are enriched in acidic residues; sequence CYSESEQEDPET. A compositionally biased stretch (low complexity) spans 144-160; it reads ASATSSPVAARRASSSS. Residues 228 to 239 show a composition bias toward polar residues; sequence CRVSENSSTTPE. Positions 243-259 are enriched in low complexity; it reads LNSLSSDDTSSLNNSQD. Residues 272–285 are compositionally biased toward basic and acidic residues; it reads MTDRDEIKSSEDDE. Positions 285-406 are necessary for interaction with PSCD2 and to translocate to the plasma membrane; that stretch reads EMEKLYKSLE…TSSDCVENSL (122 aa). Polar residues predominate over residues 392-406; it reads EIMNPTSSDCVENSL.

As to quaternary structure, interacts with guanine-nucleotide exchange factors PSCD1, PSCD2, PSCD3 and PSCD4. In terms of tissue distribution, expressed in brain, spleen, lung, testis and kidney.

Its subcellular location is the cytoplasm. The protein localises to the cell membrane. Functionally, enhances the promotion of guanine-nucleotide exchange by PSCD2 on ARF6 in a concentration-dependent manner. This is Interactor protein for cytohesin exchange factors 1 (Ipcef1) from Rattus norvegicus (Rat).